A 440-amino-acid chain; its full sequence is MSEYSQTVPELVSWARKNDFSISLPVERLAFLMAIAVLNSERLDGEMSESELVDAFREVCKGFEQTTESVAVRANNAINDMVRQKLLNRFTSELADNNAIYRLTPLGMGISDYYIRQREFSTLRLSMQLSVVASELHRAAEAAEEGGDEFHWHRNVFAPLKYSVAEIFDSIDMSQRVMDEQQSSVKEDIAALLNQDWQAAIANCEQLLSETSGTLRELQDTLEAAGDKLQANLLRIQEANMDSGGSELVDKLVFDLQSKLDRIISWGQQAIDLWIGYDRHVHKFIRTAIDMDKNRIFSQRLRQSVQHYFDNPWTLTIANAERLLDMRDEELTLRNEEVTGELPLALEYEEFSEINEQLAEMIEKALLIYRQEQRPLDLGAVLRDYLAQHPLSRHFDVARILVDQAVRLGVAEADFSGLPAEWLAINDYGAKVQAHVIDTY.

The segment at 208-236 (LSETSGTLRELQDTLEAAGDKLQANLLRI) is leucine-zipper.

This sequence belongs to the MukF family. Interacts, and probably forms a ternary complex, with MukE and MukB via its C-terminal region. The complex formation is stimulated by calcium or magnesium. It is required for an interaction between MukE and MukB.

The protein localises to the cytoplasm. Its subcellular location is the nucleoid. Its function is as follows. Involved in chromosome condensation, segregation and cell cycle progression. May participate in facilitating chromosome segregation by condensation DNA from both sides of a centrally located replisome during cell division. Not required for mini-F plasmid partitioning. Probably acts via its interaction with MukB and MukE. Overexpression results in anucleate cells. It has a calcium binding activity. The chain is Chromosome partition protein MukF from Photorhabdus laumondii subsp. laumondii (strain DSM 15139 / CIP 105565 / TT01) (Photorhabdus luminescens subsp. laumondii).